The primary structure comprises 406 residues: Probable tRNA sulfurtransferase (406 aa).

The THUMP domain maps to 60-166 (DQVMNRLKLV…LNGIFLSSET (107 aa)). ATP-binding positions include 184–185 (MM), 209–210 (HF), R266, G288, and Q297.

Belongs to the ThiI family.

The protein resides in the cytoplasm. The catalysed reaction is [ThiI sulfur-carrier protein]-S-sulfanyl-L-cysteine + a uridine in tRNA + 2 reduced [2Fe-2S]-[ferredoxin] + ATP + H(+) = [ThiI sulfur-carrier protein]-L-cysteine + a 4-thiouridine in tRNA + 2 oxidized [2Fe-2S]-[ferredoxin] + AMP + diphosphate. The enzyme catalyses [ThiS sulfur-carrier protein]-C-terminal Gly-Gly-AMP + S-sulfanyl-L-cysteinyl-[cysteine desulfurase] + AH2 = [ThiS sulfur-carrier protein]-C-terminal-Gly-aminoethanethioate + L-cysteinyl-[cysteine desulfurase] + A + AMP + 2 H(+). It functions in the pathway cofactor biosynthesis; thiamine diphosphate biosynthesis. Functionally, catalyzes the ATP-dependent transfer of a sulfur to tRNA to produce 4-thiouridine in position 8 of tRNAs, which functions as a near-UV photosensor. Also catalyzes the transfer of sulfur to the sulfur carrier protein ThiS, forming ThiS-thiocarboxylate. This is a step in the synthesis of thiazole, in the thiamine biosynthesis pathway. The sulfur is donated as persulfide by IscS. The sequence is that of Probable tRNA sulfurtransferase from Limosilactobacillus reuteri subsp. reuteri (strain JCM 1112) (Lactobacillus reuteri).